The chain runs to 230 residues: Cell division ATP-binding protein FtsE (230 aa).

An ABC transporter domain is found at 3–228 (ITLDHVTKQY…RDEQRGVYGM (226 aa)). Residue 37-44 (GPSGSGKS) participates in ATP binding.

The protein belongs to the ABC transporter superfamily. As to quaternary structure, homodimer. Forms a membrane-associated complex with FtsX.

The protein localises to the cell membrane. Part of the ABC transporter FtsEX involved in cellular division. Has ATPase activity. In Mycobacterium tuberculosis (strain ATCC 25618 / H37Rv), this protein is Cell division ATP-binding protein FtsE.